The following is a 515-amino-acid chain: Centromere protein T (515 aa).

Disordered stretches follow at residues 24–156 (ADSR…KRKQ) and 271–411 (LSGK…DPHK). Positions 29 to 44 (PMRRRSTRINAQRRRS) are enriched in basic residues. Over residues 45 to 58 (QTPYSNRQGSQTKT) the composition is skewed to polar residues. Residue Thr-86 is modified to Phosphothreonine. Residues 94–375 (ILLTAPESST…DSLPAEQPPP (282 aa)) are flexible stalk domain. The segment covering 296 to 306 (SSGTRLQSRMS) has biased composition (polar residues). Ser-313, Ser-333, Ser-345, Ser-346, Ser-357, and Ser-376 each carry phosphoserine.

The protein belongs to the CENP-T/CNN1 family. In terms of assembly, component of the CENPA-CAD complex, composed of CENPI, CENPK, CENPL, CENPO, CENPP, CENPQ, CENPR and CENPS. The CENPA-CAD complex is probably recruited on centromeres by the CENPA-NAC complex, at least composed of CENPA, CENPC, CENPH, CENPM, CENPN, CENPT and CENPU. Identified in a centromeric complex containing histones H2A, H2B, H3 and H4, and at least CENPA, CENPB, CENPC, CENPT, CENPN, HJURP, SUPT16H, SSRP1 and RSF1. Interacts (via N-terminus) with the NDC80 complex. Heterodimer with CENPW; this dimer coassembles with CENPS-CENPX heterodimers at centromeres to form the tetrameric CENP-T-W-S-X complex. Post-translationally, dynamically phosphorylated during the cell cycle. Phosphorylated during G2 phase, metaphase and anaphase, but not during telophase or G1 phase.

It localises to the nucleus. The protein localises to the chromosome. The protein resides in the centromere. Its subcellular location is the kinetochore. In terms of biological role, component of the CENPA-NAC (nucleosome-associated) complex, a complex that plays a central role in assembly of kinetochore proteins, mitotic progression and chromosome segregation. The CENPA-NAC complex recruits the CENPA-CAD (nucleosome distal) complex and may be involved in incorporation of newly synthesized CENPA into centromeres. Part of a nucleosome-associated complex that binds specifically to histone H3-containing nucleosomes at the centromere, as opposed to nucleosomes containing CENPA. Component of the heterotetrameric CENP-T-W-S-X complex that binds and supercoils DNA, and plays an important role in kinetochore assembly. CENPT has a fundamental role in kinetochore assembly and function. It is one of the inner kinetochore proteins, with most further proteins binding downstream. Required for normal chromosome organization and normal progress through mitosis. This Mus musculus (Mouse) protein is Centromere protein T (Cenpt).